Consider the following 711-residue polypeptide: DNA ligase (711 aa).

The interval 1–21 is disordered; sequence MNATHRGAQADASAPAGGLPP. The segment covering 10–21 has biased composition (low complexity); sequence ADASAPAGGLPP. Residues 52–56, 101–102, and Glu-146 each bind NAD(+); these read DAEYD and SL. The N6-AMP-lysine intermediate role is filled by Lys-148. Residues Arg-169, Glu-205, Lys-322, and Lys-346 each contribute to the NAD(+) site. Zn(2+) is bound by residues Cys-440, Cys-443, Cys-458, and Cys-464. The region spanning 623 to 711 is the BRCT domain; sequence RAPAPLAGKT…VGAGQPGEQS (89 aa).

It belongs to the NAD-dependent DNA ligase family. LigA subfamily. Mg(2+) is required as a cofactor. It depends on Mn(2+) as a cofactor.

The enzyme catalyses NAD(+) + (deoxyribonucleotide)n-3'-hydroxyl + 5'-phospho-(deoxyribonucleotide)m = (deoxyribonucleotide)n+m + AMP + beta-nicotinamide D-nucleotide.. In terms of biological role, DNA ligase that catalyzes the formation of phosphodiester linkages between 5'-phosphoryl and 3'-hydroxyl groups in double-stranded DNA using NAD as a coenzyme and as the energy source for the reaction. It is essential for DNA replication and repair of damaged DNA. The chain is DNA ligase from Cupriavidus pinatubonensis (strain JMP 134 / LMG 1197) (Cupriavidus necator (strain JMP 134)).